Consider the following 411-residue polypeptide: Na(+)-translocating NADH-quinone reductase subunit F (411 aa).

A helical transmembrane segment spans residues 5 to 25; it reads VILALGIAAFTVIVLVLVAII. The 2Fe-2S ferredoxin-type domain maps to 36–130; that stretch reads GDITIGINDD…NMEVELPEEI (95 aa). Residues cysteine 73, cysteine 79, cysteine 82, and cysteine 114 each coordinate [2Fe-2S] cluster. Positions 133-273 constitute an FAD-binding FR-type domain; it reads VKKWECTVIS…SGPFGEFFAK (141 aa).

This sequence belongs to the NqrF family. In terms of assembly, composed of six subunits; NqrA, NqrB, NqrC, NqrD, NqrE and NqrF. [2Fe-2S] cluster serves as cofactor. It depends on FAD as a cofactor.

Its subcellular location is the cell inner membrane. The enzyme catalyses a ubiquinone + n Na(+)(in) + NADH + H(+) = a ubiquinol + n Na(+)(out) + NAD(+). Its function is as follows. NQR complex catalyzes the reduction of ubiquinone-1 to ubiquinol by two successive reactions, coupled with the transport of Na(+) ions from the cytoplasm to the periplasm. The first step is catalyzed by NqrF, which accepts electrons from NADH and reduces ubiquinone-1 to ubisemiquinone by a one-electron transfer pathway. The protein is Na(+)-translocating NADH-quinone reductase subunit F of Haemophilus influenzae (strain PittEE).